The following is a 99-amino-acid chain: Carboxysome shell vertex protein CcmL (99 aa).

The BMV domain occupies 1 to 83 (MRIAKVRGTV…VDAAVIAIID (83 aa)).

This sequence belongs to the CcmL/EutN family. CcmL subfamily. As to quaternary structure, homopentamer. Interacts with full-length CcmM.

The protein localises to the carboxysome. In terms of biological role, probably forms vertices in the carboxysome, a polyhedral inclusion where RuBisCO (ribulose bisphosphate carboxylase, rbcL-rbcS) is sequestered. Has been modeled to induce curvature upon insertion into an otherwise flat hexagonal molecular layer of CcmK subunits. Functionally, beta-carboxysome assembly initiates when soluble RuBisCO is condensed into a liquid matrix in a pre-carboxysome by the RbcS-like domains of probably both CcmM58 and CcmM35. CcmN interacts with the N-terminus of CcmM58, and then recruits the CcmK2 major shell protein via CcmN's encapsulation peptide. Shell formation requires CcmK proteins and CcmO. CcmL caps the otherwise elongated carboxysome. Once fully encapsulated carboxysomes are formed, they migrate within the cell probably via interactions with the cytoskeleton. This chain is Carboxysome shell vertex protein CcmL, found in Synechococcus elongatus (strain ATCC 33912 / PCC 7942 / FACHB-805) (Anacystis nidulans R2).